The sequence spans 59 residues: Alpha-conotoxin CIA (59 aa).

The first 16 residues, 1–16 (MFTVFLLVVLTITVVS), serve as a signal peptide directing secretion. A propeptide spanning residues 17–42 (FPSDRASDGRDDEAKDERSDMYKSKR) is cleaved from the precursor. Intrachain disulfides connect cysteine 46-cysteine 51 and cysteine 47-cysteine 57. Cysteine 57 is subject to Cysteine amide.

This sequence belongs to the conotoxin A superfamily. In terms of tissue distribution, expressed by the venom duct.

It is found in the secreted. Its function is as follows. Alpha-conotoxins act on postsynaptic membranes, they bind to the nicotinic acetylcholine receptors (nAChR) and thus inhibit them. This toxin blocks the rat muscle nAChRs alpha-1-beta-1-gamma-delta (CHRNA1-CHRNB1-CHRNG-CHRND) (IC(50)=5.7 nM) and the rat neuronal nAChR alpha-3-beta-2/CHRNA3-CHRNB2 (IC(50)=2060 nM). In vivo, intramuscular injection into zebrafish produces rapid flaccid paralysis. This is Alpha-conotoxin CIA from Conus catus (Cat cone).